A 775-amino-acid polypeptide reads, in one-letter code: Ankyrin repeat and EF-hand domain-containing protein 1 (775 aa).

8 ANK repeats span residues 47–76 (DGLS…HPDV), 184–213 (TGRT…EVNA), 217–246 (DRHH…DMGL), 250–279 (DGNT…DLKW), 524–553 (TYKT…NVNA), 557–586 (FLWT…SIDA), 590–619 (NNST…KFQI), and 623–652 (KGHA…NLPK).

The chain is Ankyrin repeat and EF-hand domain-containing protein 1 (Ankef1) from Mus musculus (Mouse).